The primary structure comprises 145 residues: Protein SprT-like (145 aa).

The region spanning 5 to 141 is the SprT-like domain; it reads NYVKQVSVED…CGRCMGKLRL (137 aa). His-64 contributes to the Zn(2+) binding site. Glu-65 is an active-site residue. Zn(2+) is bound at residue His-68.

This sequence belongs to the SprT family. Zn(2+) serves as cofactor.

It localises to the cytoplasm. The sequence is that of Protein SprT-like from Streptococcus sanguinis (strain SK36).